Consider the following 48-residue polypeptide: Sperm protamine P1 (48 aa).

The protein belongs to the protamine P1 family. In terms of assembly, cross-linked by interchain disulfide bonds around the DNA-helix. As to expression, testis.

It is found in the nucleus. It localises to the chromosome. In terms of biological role, protamines substitute for histones in the chromatin of sperm during the haploid phase of spermatogenesis. They compact sperm DNA into a highly condensed, stable and inactive complex. This is Sperm protamine P1 (PRM1) from Cavia porcellus (Guinea pig).